The sequence spans 541 residues: Sialate O-acetylesterase (541 aa).

Residues M1–G23 form the signal peptide. Residues N107, N138, N188, N293, N356, N427, N448, and N462 are each glycosylated (N-linked (GlcNAc...) asparagine).

In terms of assembly, disulfide-linked heterodimer of a small subunit and a large subunit. In terms of processing, the two subunits are derived from a single precursor by proteolytic cleavage. The lysosomal isoform is glycosylated. In terms of tissue distribution, highly expressed in liver, testis, and kidney, whereas skeletal muscle, adipose tissue, and heart have lower levels. Highest expression in brain and ovary and lower levels in liver and thymus.

The protein localises to the lysosome. It is found in the cytoplasm. The catalysed reaction is N-acetyl-9-O-acetylneuraminate + H2O = N-acetylneuraminate + acetate + H(+). It catalyses the reaction an Ac-O-9-sialoglycoconjugate + H2O = a sialoglycoconjugate + acetate + H(+). Its activity is regulated as follows. Inhibited by diisopropyl fluorophosphate and diethyl-P-nitrophenyl phosphate. Its function is as follows. Catalyzes the removal of O-acetyl ester groups from position 9 of the free diacetylated sialate N-acetyl-9-O-acetylneuraminate (Neu5,9Ac2) in the cytosol and of the diacetylated sialate residues of sialylglycoconjugates in the lysosomes. Together with the sialate-O-acetyltransferase they regulate the balance of acetylated sialoglycoconjugates, key players in various processes such as cell-cell interactions, host-pathogen recognition, and tumor antigenicity. This chain is Sialate O-acetylesterase (Siae), found in Mus musculus (Mouse).